The following is a 250-amino-acid chain: Testis-expressed protein 101 (250 aa).

The signal sequence occupies residues 1–25 (MGACRIQYVLLIFLLIASRWTLVQN). 4 N-linked (GlcNAc...) asparagine glycosylation sites follow: Asn-45, Asn-110, Asn-134, and Asn-160. A UPAR/Ly6 domain is found at 141–215 (CPTCVALGSC…VKETCSYQSF (75 aa)). Gly-224 carries the GPI-anchor amidated glycine lipid modification. Residues 225-250 (ASQMPTSLWVLELLFPLLLLPLTHFP) constitute a propeptide, removed in mature form.

In terms of assembly, interacts with VAMP3. Interacts with LY6K. Interacts with DPEP3; co-localized on the cell surface of spermatocytes, spermatids, and testicular spermatozoa, co-localized only in cytoplasmic droplets of caput and corpus epididymal sperm. Interacts with ADAM3; co-localized on sperm surface. Interacts with ADAM5. N-glycosylated; by high mannose and/or biantennary complex and/or certain types of hybrid oligosaccharides; possesses different oligosaccharides chains according to its subcellular localization in the testis. Post-translationally, sheds from membrane raft by ACE and released from the cell surface of epididymal sperm while it passes through the caput epididymis leading to disappearance of TEX101 on spermatozoa; is essential to produce fertile spermatozoa. Detected in testis and ovary. Expressed in spermatocytes, spermatids and testicular spermatozoa, but not in spermatogonia or interstitial cells. Expressed abundantly in testicular germ cells (TGCs) but mostly disappeared from epididymal spermatozoa.

It localises to the cell membrane. The protein resides in the membrane raft. Its subcellular location is the cytoplasmic vesicle. The protein localises to the secretory vesicle. It is found in the acrosome. It localises to the secreted. Plays a role in fertilization by controlling binding of sperm to zona pellucida and migration of spermatozoa into the oviduct probably through molecule adhesion ADAM3. May play a role in signal transduction and promote protein tyrosine phosphorylation. The protein is Testis-expressed protein 101 of Mus musculus (Mouse).